Here is a 375-residue protein sequence, read N- to C-terminus: Period circadian protein (375 aa).

Disordered regions lie at residues 27-119 (VTAP…VPPV), 140-189 (KHRE…WEGE), and 219-255 (KCQA…QYTQ). Over residues 69-91 (SGNFTTGSNLHMSSVTNTSNAGT) the composition is skewed to low complexity. Positions 92–113 (GTSGTGNSGGGGGGGGGAGPGN) are enriched in gly residues. Residues 145 to 156 (RGRSGEKNKKSA) are compositionally biased toward basic and acidic residues. Residues 224-243 (GAGGGGSGSVGGTGNIGSGG) show a composition bias toward gly residues. A compositionally biased stretch (polar residues) spans 245-255 (NAQPSTNQYTQ).

Forms a heterodimer with timeless (TIM); the complex then translocates into the nucleus. Post-translationally, phosphorylated with a circadian rhythmicity, probably by the double-time protein (dbt). Phosphorylation could be implicated in the stability of per monomer and in the formation of heterodimer per-tim.

The protein localises to the nucleus. The protein resides in the cytoplasm. It localises to the perinuclear region. Functionally, essential for biological clock functions. Determines the period length of circadian and ultradian rhythms; an increase in PER dosage leads to shortened circadian rhythms and a decrease leads to lengthened circadian rhythms. Essential for the circadian rhythmicity of locomotor activity, eclosion behavior, and for the rhythmic component of the male courtship song that originates in the thoracic nervous system. The biological cycle depends on the rhythmic formation and nuclear localization of the TIM-PER complex. Light induces the degradation of TIM, which promotes elimination of PER. Nuclear activity of the heterodimer coordinatively regulates PER and TIM transcription through a negative feedback loop. Behaves as a negative element in circadian transcriptional loop. Does not appear to bind DNA, suggesting indirect transcriptional inhibition. This Drosophila sucinea (Fruit fly) protein is Period circadian protein (per).